Here is a 1509-residue protein sequence, read N- to C-terminus: ABC transporter G family member 38 (1509 aa).

One can recognise an ABC transporter 1 domain in the interval 196–467 (LGLVGLNFAK…FERCGFRCPE (272 aa)). 229-236 (GPPSSGKT) serves as a coordination point for ATP. The region spanning 545-758 (ELLKTSCSKE…AYIAFSSNEM (214 aa)) is the ABC transmembrane type-2 1 domain. 7 helical membrane-spanning segments follow: residues 563-583 (FVYIFKTVQGILVALIASTVF), 598-618 (IYIGALIFVMITNMFSGFADL), 651-671 (IPSSLFESIIWVAITYYTMGF), 682-702 (LLVVFMLQQMAAGLFRVTAGL), 707-727 (VVTNTAGSLAVLIMFVLGGFI), 733-753 (IPKWWVWAYWCSPLTYAYIAF), and 791-811 (YWIATGALLGFTILFNVLFSL). One can recognise an ABC transporter 2 domain in the interval 908-1160 (MSFNEINYYV…KVVEYFEAIP (253 aa)). An ATP-binding site is contributed by 953–960 (GVSGAGKT). The 215-residue stretch at 1233 to 1447 (NQFKLCLWKQ…TVYGLIVSQY (215 aa)) folds into the ABC transmembrane type-2 2 domain. The next 7 membrane-spanning stretches (helical) occupy residues 1252-1272 (YNLVRIFFALFTALMLGTIFW), 1284-1304 (LLVIIGSMYAAVLFVGFENSV), 1336-1356 (VVVEIPYVFVETVIYTLIVYP), 1367-1387 (FFWFFYVSFFTFLYFTYYGMM), 1397-1417 (VASILGAAFYTLFNLFSGFFI), 1425-1445 (WWVWYYWLCPVAWTVYGLIVS), and 1478-1498 (FMGVVAAVLAGFTVFFAFTYA).

It belongs to the ABC transporter superfamily. ABCG family. PDR (TC 3.A.1.205) subfamily.

Its subcellular location is the membrane. May be a general defense protein. The sequence is that of ABC transporter G family member 38 from Oryza sativa subsp. japonica (Rice).